The primary structure comprises 594 residues: Probable glucose transporter rco-3 (594 aa).

The Cytoplasmic portion of the chain corresponds to 1–13 (MAIFAMGWQKPDN). A helical transmembrane segment spans residues 14-34 (VAGSSAPAIMVGLFVATGGLL). Topologically, residues 35–73 (LGYDTGTINGILAMKSFKDHFSTGYIDGNGQPGIYPKES) are extracellular. Residues 74–94 (ALIVAMLSAGTAIGALLAAPL) traverse the membrane as a helical segment. Over 95 to 103 (GDHYGRRRS) the chain is Cytoplasmic. Residues 104-124 (LIGAIGIFVIGAILQVCAYNI) traverse the membrane as a helical segment. Residue aspartate 125 is a topological domain, extracellular. Residues 126 to 146 (LLVAGRTVAGVGIGIVSVLVP) traverse the membrane as a helical segment. At 147 to 159 (LYQSEMAPKWIRG) the chain is on the cytoplasmic side. Residues 160 to 180 (TLVCTYQLSITMGLLAAAVVN) traverse the membrane as a helical segment. Topologically, residues 181–193 (ILTYKLKTAAAYR) are extracellular. Residues 194–214 (VPIGLQLTWACVLALGLTVLP) traverse the membrane as a helical segment. At 215–293 (ETPRYLIKRG…TGCCLQMLQQ (79 aa)) the chain is on the cytoplasmic side. A helical transmembrane segment spans residues 294-314 (LTGVNFIMYYGTTFFNNAGVG). Topologically, residues 315–318 (NPFK) are extracellular. Residues 319-339 (ISLIMQVINTASTIPGLFVVE) traverse the membrane as a helical segment. Topologically, residues 340–345 (SWGRRR) are cytoplasmic. Residues 346-366 (LLMVGAIGMAICQLLIAAFAT) form a helical membrane-spanning segment. The Extracellular portion of the chain corresponds to 367–378 (ASGSNNLSAQNK). Asparagine 372 carries N-linked (GlcNAc...) asparagine glycosylation. A helical transmembrane segment spans residues 379 to 403 (VLITFVAIYIFFFAASWGPVVWVVT). The Cytoplasmic portion of the chain corresponds to 404-415 (SEIYPLKVRAKS). A helical membrane pass occupies residues 416-436 (MSITTASNWFLNFGIAYGTPY). The Extracellular portion of the chain corresponds to 437–454 (MQTNSAASDESSIDLGSK). A helical membrane pass occupies residues 455 to 475 (VFFVWGAFCIVAVGFVWCMVY). Topologically, residues 476 to 594 (ETSKISLEQI…ASLGNIDLSY (119 aa)) are cytoplasmic. The segment at 512-594 (DLGFSDGGIP…ASLGNIDLSY (83 aa)) is disordered. A compositionally biased stretch (low complexity) spans 524 to 576 (QQLQQQPQQPQQQQQQHHQQQQHQLQVDLQQSQSRTSNSSTSQTDTGGSNNTG).

It belongs to the major facilitator superfamily. Sugar transporter (TC 2.A.1.1) family.

It is found in the membrane. Functionally, probable glucose transporter. Involved in sugar transport, carbon catabolite repression, and initiation of conidiophore development. In Neurospora crassa (strain ATCC 24698 / 74-OR23-1A / CBS 708.71 / DSM 1257 / FGSC 987), this protein is Probable glucose transporter rco-3 (rco-3).